Here is a 91-residue protein sequence, read N- to C-terminus: UPF0250 protein Lcho_4239 (91 aa).

It belongs to the UPF0250 family.

In Leptothrix cholodnii (strain ATCC 51168 / LMG 8142 / SP-6) (Leptothrix discophora (strain SP-6)), this protein is UPF0250 protein Lcho_4239.